A 442-amino-acid polypeptide reads, in one-letter code: NAD(P)H sulfur oxidoreductase (CoA-dependent) (442 aa).

13–14 (AA) contacts FAD. R24 is a CoA binding site. Residues 35–36 (EA) and 42–44 (HAP) contribute to the FAD site. Residues 41–45 (SHAPC), 62–63 (HY), and R72 contribute to the CoA site. Residue C45 is the Redox-active of the active site. 3 residues coordinate FAD: V82, D280, and A298. Positions 302 and 358 each coordinate CoA. Y422 provides a ligand contact to FAD. Residues W430 and R438 each coordinate CoA.

This sequence belongs to the class-III pyridine nucleotide-disulfide oxidoreductase family. Homodimer. The cofactor is FAD.

It localises to the cytoplasm. The catalysed reaction is hydrogen sulfide + NADP(+) = sulfur + NADPH. It catalyses the reaction hydrogen sulfide + NAD(+) = sulfur + NADH. It carries out the reaction NADP(+) + 2 CoA = CoA-disulfide + NADPH + H(+). The enzyme catalyses NAD(+) + 2 CoA = CoA-disulfide + NADH + H(+). Functionally, catalyzes the CoA-dependent reduction of elemental sulfur (S(0)) to produce hydrogen sulfide. Can use both NADPH and NADH, but shows a preference for NADPH. May enable S(0) to be used, via sulfide, for iron-sulfur cluster synthesis by SipA. Also shows coenzyme A disulfide reductase (CoADR) activity with both NADH and NADPH. However, CoADR specific activity is about 20-fold lower than the sulfur reduction assay and CoADR activity appears to be an artifactual side reaction and is not thought to have any physiological relevance. Also shows NAD(P)H oxidase activity with both NADH and NADPH. This chain is NAD(P)H sulfur oxidoreductase (CoA-dependent), found in Pyrococcus furiosus (strain ATCC 43587 / DSM 3638 / JCM 8422 / Vc1).